Reading from the N-terminus, the 79-residue chain is Three-finger toxin A2 (79 aa).

The N-terminal stretch at 1 to 21 (MKTLLLTLVVVTIVCLDLGNS) is a signal peptide. 4 disulfides stabilise this stretch: Cys-24–Cys-41, Cys-34–Cys-59, Cys-63–Cys-71, and Cys-72–Cys-77.

Belongs to the three-finger toxin family. Short-chain subfamily. As to expression, expressed by the venom gland.

It is found in the secreted. This chain is Three-finger toxin A2, found in Micrurus laticollaris (Balsas coral snake).